The sequence spans 205 residues: Holliday junction branch migration complex subunit RuvA (205 aa).

Residues 1–64 are domain I; that stretch reads MIGKLKGTID…EDQLKLFGFL (64 aa). Residues 65 to 143 form a domain II region; that stretch reads SALEREWFRL…AFSGEMAPSI (79 aa). The interval 144 to 153 is flexible linker; it reads GLKQELGEGV. Residues 153–205 form a domain III region; the sequence is VAAAPVADAVSALTNLGYSRDQAANAVAAALKNGGEGGDSAKLIRLGLKELSR.

This sequence belongs to the RuvA family. Homotetramer. Forms an RuvA(8)-RuvB(12)-Holliday junction (HJ) complex. HJ DNA is sandwiched between 2 RuvA tetramers; dsDNA enters through RuvA and exits via RuvB. An RuvB hexamer assembles on each DNA strand where it exits the tetramer. Each RuvB hexamer is contacted by two RuvA subunits (via domain III) on 2 adjacent RuvB subunits; this complex drives branch migration. In the full resolvosome a probable DNA-RuvA(4)-RuvB(12)-RuvC(2) complex forms which resolves the HJ.

It is found in the cytoplasm. In terms of biological role, the RuvA-RuvB-RuvC complex processes Holliday junction (HJ) DNA during genetic recombination and DNA repair, while the RuvA-RuvB complex plays an important role in the rescue of blocked DNA replication forks via replication fork reversal (RFR). RuvA specifically binds to HJ cruciform DNA, conferring on it an open structure. The RuvB hexamer acts as an ATP-dependent pump, pulling dsDNA into and through the RuvAB complex. HJ branch migration allows RuvC to scan DNA until it finds its consensus sequence, where it cleaves and resolves the cruciform DNA. The polypeptide is Holliday junction branch migration complex subunit RuvA (Rhizobium meliloti (strain 1021) (Ensifer meliloti)).